Here is a 215-residue protein sequence, read N- to C-terminus: Probable transaldolase (215 aa).

The active-site Schiff-base intermediate with substrate is the K83.

Belongs to the transaldolase family. Type 3B subfamily.

The protein resides in the cytoplasm. The enzyme catalyses D-sedoheptulose 7-phosphate + D-glyceraldehyde 3-phosphate = D-erythrose 4-phosphate + beta-D-fructose 6-phosphate. It functions in the pathway carbohydrate degradation; pentose phosphate pathway; D-glyceraldehyde 3-phosphate and beta-D-fructose 6-phosphate from D-ribose 5-phosphate and D-xylulose 5-phosphate (non-oxidative stage): step 2/3. Its function is as follows. Transaldolase is important for the balance of metabolites in the pentose-phosphate pathway. In Clostridium perfringens (strain SM101 / Type A), this protein is Probable transaldolase.